The chain runs to 533 residues: CTP synthase (533 aa).

An amidoligase domain region spans residues 1–264 (MKYIFVTGGV…GKLVTEKLNL (264 aa)). Ser12 contributes to the CTP binding site. Position 12 (Ser12) interacts with UTP. ATP is bound by residues 13–18 (SLGKGI) and Asp70. Residues Asp70 and Glu138 each coordinate Mg(2+). CTP is bound by residues 145–147 (DIE), 185–190 (KTKPTQ), and Lys221. Residues 185–190 (KTKPTQ) and Lys221 contribute to the UTP site. Residue 237–239 (KDA) coordinates ATP. In terms of domain architecture, Glutamine amidotransferase type-1 spans 289–533 (TIGIVGKYIE…HGLVKASIEK (245 aa)). Gly357 serves as a coordination point for L-glutamine. The active-site Nucleophile; for glutamine hydrolysis is Cys384. L-glutamine is bound by residues 385-388 (LGMQ), Glu407, and Arg464. Catalysis depends on residues His509 and Glu511.

This sequence belongs to the CTP synthase family. In terms of assembly, homotetramer.

The enzyme catalyses UTP + L-glutamine + ATP + H2O = CTP + L-glutamate + ADP + phosphate + 2 H(+). It catalyses the reaction L-glutamine + H2O = L-glutamate + NH4(+). It carries out the reaction UTP + NH4(+) + ATP = CTP + ADP + phosphate + 2 H(+). It functions in the pathway pyrimidine metabolism; CTP biosynthesis via de novo pathway; CTP from UDP: step 2/2. Allosterically activated by GTP, when glutamine is the substrate; GTP has no effect on the reaction when ammonia is the substrate. The allosteric effector GTP functions by stabilizing the protein conformation that binds the tetrahedral intermediate(s) formed during glutamine hydrolysis. Inhibited by the product CTP, via allosteric rather than competitive inhibition. Functionally, catalyzes the ATP-dependent amination of UTP to CTP with either L-glutamine or ammonia as the source of nitrogen. Regulates intracellular CTP levels through interactions with the four ribonucleotide triphosphates. The sequence is that of CTP synthase from Methanococcus maripaludis (strain DSM 14266 / JCM 13030 / NBRC 101832 / S2 / LL).